Consider the following 322-residue polypeptide: Daunorubicin resistance ATP-binding protein DrrA2 (322 aa).

An ABC transporter domain is found at 6 to 236 (VRAEAMEKRY…VGGDRIEVVV (231 aa)). 38 to 45 (GPNGAGKT) is a binding site for ATP.

It belongs to the ABC transporter superfamily. Drug exporter-1 (DrugE1) (TC 3.A.1.105) family. In terms of assembly, the complex is probably composed of two ATP-binding proteins (DrrA2) and two transmembrane proteins (DrrB2).

Its subcellular location is the cell membrane. It carries out the reaction daunorubicin(in) + ATP + H2O = daunorubicin(out) + ADP + phosphate + H(+). In terms of biological role, part of the ABC transporter complex DrrA2B2 involved in daunorubicin efflux. Responsible for energy coupling to the transport system. Confers self-resistance to daunorubicin, an antibiotic produced by S.coeruleorubidus. The protein is Daunorubicin resistance ATP-binding protein DrrA2 of Streptomyces coeruleorubidus.